We begin with the raw amino-acid sequence, 1004 residues long: 2-oxoglutarate dehydrogenase E1 component (1004 aa).

It belongs to the alpha-ketoglutarate dehydrogenase family. Homodimer. Part of the 2-oxoglutarate dehydrogenase (OGDH) complex composed of E1 (2-oxoglutarate dehydrogenase), E2 (dihydrolipoamide succinyltransferase) and E3 (dihydrolipoamide dehydrogenase); the complex contains multiple copies of the three enzymatic components (E1, E2 and E3). Thiamine diphosphate is required as a cofactor.

It carries out the reaction N(6)-[(R)-lipoyl]-L-lysyl-[protein] + 2-oxoglutarate + H(+) = N(6)-[(R)-S(8)-succinyldihydrolipoyl]-L-lysyl-[protein] + CO2. E1 component of the 2-oxoglutarate dehydrogenase (OGDH) complex which catalyzes the decarboxylation of 2-oxoglutarate, the first step in the conversion of 2-oxoglutarate to succinyl-CoA and CO(2). The chain is 2-oxoglutarate dehydrogenase E1 component from Brucella abortus (strain S19).